We begin with the raw amino-acid sequence, 183 residues long: Glutamyl-tRNA(Gln) amidotransferase subunit F, mitochondrial (183 aa).

This sequence belongs to the GatF family. In terms of assembly, subunit of the heterotrimeric GatFAB amidotransferase (AdT) complex, composed of A (HER2), B (PET112) and F (YGR102C) subunits.

It is found in the mitochondrion inner membrane. The enzyme catalyses L-glutamyl-tRNA(Gln) + L-glutamine + ATP + H2O = L-glutaminyl-tRNA(Gln) + L-glutamate + ADP + phosphate + H(+). Allows the formation of correctly charged Gln-tRNA(Gln) through the transamidation of misacylated Glu-tRNA(Gln) in the mitochondria. The reaction takes place in the presence of glutamine and ATP through an activated gamma-phospho-Glu-tRNA(Gln). Required for proper protein synthesis within the mitochondrion. The sequence is that of Glutamyl-tRNA(Gln) amidotransferase subunit F, mitochondrial from Saccharomyces cerevisiae (strain ATCC 204508 / S288c) (Baker's yeast).